A 108-amino-acid chain; its full sequence is Peptidyl-prolyl cis-trans isomerase FKBP1A (108 aa).

Position 10 is a phosphoserine (Ser-10). Residues 20 to 108 (GQTCVVHYTG…VFDVELLKLE (89 aa)) form the PPIase FKBP-type domain. Lys-53 carries the post-translational modification N6-acetyllysine; alternate. Position 53 is an N6-succinyllysine; alternate (Lys-53).

The protein belongs to the FKBP-type PPIase family. FKBP1 subfamily. As to quaternary structure, interacts with TGFBR1; prevents TGFBR1 phosphorylation by TGFBR2 and stabilizes it in the inactive conformation. Interacts with ACVR1B and SMAD7. Identified in a complex composed of RYR1, PDE4D, PKA, FKBP1A and protein phosphatase 1 (PP1). Interacts directly with RYR2. Interacts directly with RYR3. Interacts directly with RYR1. Interacts with GLMN; rapamycin and FK506 abolish the interaction with GLMN in a dose dependent manner. Ubiquitous.

The protein localises to the cytoplasm. It is found in the cytosol. It localises to the sarcoplasmic reticulum membrane. The catalysed reaction is [protein]-peptidylproline (omega=180) = [protein]-peptidylproline (omega=0). With respect to regulation, inhibited by both FK506 and rapamycin. In terms of biological role, keeps in an inactive conformation TGFBR1, the TGF-beta type I serine/threonine kinase receptor, preventing TGF-beta receptor activation in absence of ligand. Recruits SMAD7 to ACVR1B which prevents the association of SMAD2 and SMAD3 with the activin receptor complex, thereby blocking the activin signal. May modulate the RYR1 calcium channel activity. PPIases accelerate the folding of proteins. It catalyzes the cis-trans isomerization of proline imidic peptide bonds in oligopeptides. The polypeptide is Peptidyl-prolyl cis-trans isomerase FKBP1A (Fkbp1a) (Rattus norvegicus (Rat)).